A 180-amino-acid polypeptide reads, in one-letter code: UPF0227 protein YcfP (180 aa).

This sequence belongs to the UPF0227 family.

The sequence is that of UPF0227 protein YcfP from Escherichia coli O139:H28 (strain E24377A / ETEC).